We begin with the raw amino-acid sequence, 228 residues long: HTH-type transcriptional regulator ArcR (228 aa).

Residue 22–141 coordinates a nucleoside 3',5'-cyclic phosphate; the sequence is SYINIPVGVL…VKLFSLLSET (120 aa). An HTH crp-type domain is found at 155 to 228; sequence KLAKERVTKI…SKNWLVSKDL (74 aa). The segment at residues 188–207 is a DNA-binding region (H-T-H motif); sequence IQLLSDMAGISRETTSHIIN.

Its subcellular location is the cytoplasm. In terms of biological role, positively regulates the expression of the arcABDCR operon under anaerobic conditions, thus playing an essential role in arginine catabolism. May also control the expression of genes encoding proteins which are involved in anaerobic metabolism. Can bind cyclic AMP. The protein is HTH-type transcriptional regulator ArcR (arcR) of Staphylococcus epidermidis (strain ATCC 35984 / DSM 28319 / BCRC 17069 / CCUG 31568 / BM 3577 / RP62A).